A 638-amino-acid polypeptide reads, in one-letter code: Golgin subfamily A member 8S (638 aa).

Residues 1–11 (MWPQARLPPHP) are compositionally biased toward pro residues. A disordered region spans residues 1-84 (MWPQARLPPH…GESPTSSATL (84 aa)). The segment covering 50–62 (TNGSIHETATSGG) has biased composition (polar residues). Coiled-coil stretches lie at residues 105–160 (VSQL…LNTD), 223–275 (LEQS…MSQE), and 318–417 (EAEL…QQKQ). 3 disordered regions span residues 427–453 (ALPGEGDGGGHLDSEGEEAPRPIPSIP), 510–532 (KDAALGGGHHQAGAQGGDEDEAA), and 556–575 (AHNPADEPGPGAPAPQELGA). The segment covering 434 to 446 (GGGHLDSEGEEAP) has biased composition (basic and acidic residues). Over residues 514–525 (LGGGHHQAGAQG) the composition is skewed to gly residues. Residues 561–574 (DEPGPGAPAPQELG) show a composition bias toward low complexity.

The protein belongs to the GOLGA8 family.

In Homo sapiens (Human), this protein is Golgin subfamily A member 8S.